A 240-amino-acid polypeptide reads, in one-letter code: MLRLLFKRFLNVVKWFAIASVLLVLLFRVVPPPFTALMVERKVESWFDGEPIDLQRSWVPWDEISDDLKVAVMAGEDQRFPQHWGFDFGAIQAAIQHNERGGSIRGASTLSQQVSKNLFLWAGRSYLRKGLEAWFTGLIEVLWPKQRILEVYLNSVEWDEGVFGAEAAARHHFGVSAKGLSRQQASYLAAVLPNPRVWSASHPTAYVARRAAWIRQQMSQLGGDGYLVELNNARKAPWSD.

A helical transmembrane segment spans residues 9–31; that stretch reads FLNVVKWFAIASVLLVLLFRVVP.

The protein belongs to the glycosyltransferase 51 family.

The protein resides in the cell inner membrane. It catalyses the reaction [GlcNAc-(1-&gt;4)-Mur2Ac(oyl-L-Ala-gamma-D-Glu-L-Lys-D-Ala-D-Ala)](n)-di-trans,octa-cis-undecaprenyl diphosphate + beta-D-GlcNAc-(1-&gt;4)-Mur2Ac(oyl-L-Ala-gamma-D-Glu-L-Lys-D-Ala-D-Ala)-di-trans,octa-cis-undecaprenyl diphosphate = [GlcNAc-(1-&gt;4)-Mur2Ac(oyl-L-Ala-gamma-D-Glu-L-Lys-D-Ala-D-Ala)](n+1)-di-trans,octa-cis-undecaprenyl diphosphate + di-trans,octa-cis-undecaprenyl diphosphate + H(+). Its pathway is cell wall biogenesis; peptidoglycan biosynthesis. Its function is as follows. Peptidoglycan polymerase that catalyzes glycan chain elongation from lipid-linked precursors. This is Biosynthetic peptidoglycan transglycosylase from Pseudomonas fluorescens (strain SBW25).